A 695-amino-acid polypeptide reads, in one-letter code: Threonine--tRNA ligase 1, cytoplasmic (695 aa).

Residues 1-21 (MSEEKASSPSGKMDGEKPLNP) form a disordered region. In terms of domain architecture, TGS spans 51-115 (DSKPIKVTLP…ETDCTLELLK (65 aa)). An N6-acetyllysine modification is found at K215. T218 carries the phosphothreonine modification. Y270 carries the post-translational modification Phosphotyrosine. T425 is subject to Phosphothreonine.

This sequence belongs to the class-II aminoacyl-tRNA synthetase family. In terms of assembly, homodimer. Post-translationally, ISGylated.

It is found in the cytoplasm. It catalyses the reaction tRNA(Thr) + L-threonine + ATP = L-threonyl-tRNA(Thr) + AMP + diphosphate + H(+). Catalyzes the attachment of threonine to tRNA(Thr) in a two-step reaction: threonine is first activated by ATP to form Thr-AMP and then transferred to the acceptor end of tRNA(Thr). Also edits incorrectly charged tRNA(Thr) via its editing domain, at the post-transfer stage. This is Threonine--tRNA ligase 1, cytoplasmic (Tars1) from Rattus norvegicus (Rat).